We begin with the raw amino-acid sequence, 231 residues long: Isoprenyl transferase (231 aa).

The active site involves aspartate 14. Aspartate 14 provides a ligand contact to Mg(2+). Residues 15-18 (GNGR), tryptophan 19, arginine 27, histidine 31, and 59-61 (STE) each bind substrate. Asparagine 62 acts as the Proton acceptor in catalysis. Substrate contacts are provided by residues tryptophan 63, arginine 65, arginine 176, and 182–184 (RIS). A Mg(2+)-binding site is contributed by glutamate 195.

The protein belongs to the UPP synthase family. As to quaternary structure, homodimer. Requires Mg(2+) as cofactor.

Catalyzes the condensation of isopentenyl diphosphate (IPP) with allylic pyrophosphates generating different type of terpenoids. The sequence is that of Isoprenyl transferase from Aquifex pyrophilus.